The primary structure comprises 310 residues: Protein YIP5 (310 aa).

The tract at residues 1–84 (MPSNNSSFLD…VIGQNDNDGL (84 aa)) is disordered. A compositionally biased stretch (acidic residues) spans 10–22 (DIDDDLEGVDDFG). Positions 35 to 57 (DSPNMNNSTAGKGSEFYNTTGSK) are enriched in polar residues. A Phosphoserine modification is found at Ser60. Transmembrane regions (helical) follow at residues 131-151 (TDLYGAVWITATVVMINFTMS), 181-201 (LHSIWLFYGYTFGVPFITMQV), 220-240 (LISVYGYANLIWIPVCVILNI), 249-269 (TVQAIQWAIVALGWAQSSYFL), and 290-310 (SIIVVVALHTLFCLLFRFIIF).

The protein belongs to the YIP1 family. Interacts with SNX3, TVP18, TVP23, YIP1 and YIP4. Interacts with SEC4; The C-terminal cysteines in the Rab GTPase SEC4 are essential for the interaction. Interacts with YPT1, YPT6, YPT7, YPT10, YPT11, YPT31, YPT32 and YPT52; These proteins are all Rab GTPases.

The protein resides in the membrane. Its function is as follows. Possible role in vesicle-mediated transport. May be involved in proper membrane localization of Rab GTPases. In Saccharomyces cerevisiae (strain ATCC 204508 / S288c) (Baker's yeast), this protein is Protein YIP5 (YIP5).